The following is a 299-amino-acid chain: HTH-type transcriptional regulator CrgA (299 aa).

Positions 1 to 60 (MKTNSEELTVFVQVVESGSFSRAAEQLAMANSAVSRIVKRLEEKLGVNLLNRTTRQLSLT) constitute an HTH lysR-type domain. Positions 20–39 (FSRAAEQLAMANSAVSRIVK) form a DNA-binding region, H-T-H motif.

Belongs to the LysR transcriptional regulatory family. In terms of assembly, forms oligomers. Forms an octomeric ring-like structure in solution. May form hexadecamers when bound to target DNA.

Activation and repression activities are enhanced by the addition of alpha-methylene-gamma-butyrolactone (MBL), an inducer of NADPH:quinone oxidoreductase. In terms of biological role, regulatory protein that activates transcription of mdaB, encoding a NADPH:quinone oxidoreductase, and represses its own transcription. Under the same experimental conditions, no regulation of transcription of pilus and capsule genes is detected. The protein is HTH-type transcriptional regulator CrgA of Neisseria meningitidis serogroup B (strain ATCC BAA-335 / MC58).